Consider the following 200-residue polypeptide: Probable molybdenum cofactor guanylyltransferase (200 aa).

GTP-binding positions include 9–11, Lys-21, Asp-69, and Asp-100; that span reads LAG. Position 100 (Asp-100) interacts with Mg(2+).

The protein belongs to the MobA family. Mg(2+) serves as cofactor.

The protein resides in the cytoplasm. The catalysed reaction is Mo-molybdopterin + GTP + H(+) = Mo-molybdopterin guanine dinucleotide + diphosphate. Transfers a GMP moiety from GTP to Mo-molybdopterin (Mo-MPT) cofactor (Moco or molybdenum cofactor) to form Mo-molybdopterin guanine dinucleotide (Mo-MGD) cofactor. In Bacillus thuringiensis (strain Al Hakam), this protein is Probable molybdenum cofactor guanylyltransferase.